The chain runs to 181 residues: Adenylate kinase (181 aa).

ATP is bound at residue 10 to 15; the sequence is GAGKGT. Residues 30-59 form an NMP region; that stretch reads STGDLFRANIGEGTPLGIEAKQYIDAGKLV. AMP contacts are provided by residues T31, R36, 57–59, 85–88, and Q92; these read KLV and GFPR. The segment at 126–132 is LID; it reads SRGRADD. R127 contacts ATP. R129 and R140 together coordinate AMP. G166 provides a ligand contact to ATP.

Belongs to the adenylate kinase family. In terms of assembly, monomer.

The protein localises to the cytoplasm. It carries out the reaction AMP + ATP = 2 ADP. Its pathway is purine metabolism; AMP biosynthesis via salvage pathway; AMP from ADP: step 1/1. Functionally, catalyzes the reversible transfer of the terminal phosphate group between ATP and AMP. Plays an important role in cellular energy homeostasis and in adenine nucleotide metabolism. The sequence is that of Adenylate kinase from Corynebacterium glutamicum (strain R).